Consider the following 1021-residue polypeptide: 2-oxoglutarate dehydrogenase complex component E1 (1021 aa).

The transit peptide at M1–L40 directs the protein to the mitochondrion. Ca(2+) contacts are provided by H142, D155, and D157. Thiamine diphosphate contacts are provided by R311, D410, N443, and I445. Residues D410, N443, and I445 each contribute to the Mg(2+) site. K533 is covalently cross-linked (Glycyl lysine isopeptide (Lys-Gly) (interchain with G-Cter in ubiquitin)). Q675 serves as a coordination point for thiamine diphosphate.

Belongs to the alpha-ketoglutarate dehydrogenase family. Homodimer. The 2-oxoglutarate dehydrogenase complex is composed of OGDH (2-oxoglutarate dehydrogenase; E1), DLST (dihydrolipoamide succinyltransferase; E2) and DLD (dihydrolipoamide dehydrogenase; E3). It contains multiple copies of the three enzymatic components (E1, E2 and E3). In the nucleus, the 2-oxoglutarate dehydrogenase complex associates with kat2a. It depends on thiamine diphosphate as a cofactor. Mg(2+) serves as cofactor. As to expression, expressed in the brain.

The protein localises to the mitochondrion. It localises to the nucleus. It catalyses the reaction N(6)-[(R)-lipoyl]-L-lysyl-[protein] + 2-oxoglutarate + H(+) = N(6)-[(R)-S(8)-succinyldihydrolipoyl]-L-lysyl-[protein] + CO2. Its activity is regulated as follows. Calcium ions and ADP stimulate, whereas ATP and NADH reduce catalytic activity. Its function is as follows. 2-oxoglutarate dehydrogenase (E1o) component of the 2-oxoglutarate dehydrogenase complex (OGDHC). Participates in the first step, rate limiting for the overall conversion of 2-oxoglutarate to succinyl-CoA and CO(2) catalyzed by the whole OGDHC. Catalyzes the irreversible decarboxylation of 2-oxoglutarate (alpha-ketoglutarate) via the thiamine diphosphate (ThDP) cofactor and subsequent transfer of the decarboxylated acyl intermediate on an oxidized dihydrolipoyl group that is covalently amidated to the E2 enzyme (dihydrolipoyllysine-residue succinyltransferase or DLST). Plays a key role in the Krebs (citric acid) cycle, which is a common pathway for oxidation of fuel molecules, including carbohydrates, fatty acids, and amino acids. Can catalyze the decarboxylation of 2-oxoadipate in vitro, but at a much lower rate than 2-oxoglutarate. Mainly active in the mitochondrion. A fraction of the 2-oxoglutarate dehydrogenase complex also localizes in the nucleus and is required for lysine succinylation of histones: associates with KAT2A on chromatin and provides succinyl-CoA to histone succinyltransferase KAT2A. The chain is 2-oxoglutarate dehydrogenase complex component E1 (ogdh) from Xenopus laevis (African clawed frog).